Consider the following 340-residue polypeptide: Gigasin-2 (340 aa).

A signal peptide spans 1–21 (MNKMSPLYVLALCCLATTVFA). EGF-like domains lie at 22-57 (KYDC…EDCG) and 65-97 (TAAN…DMCE). 6 cysteine pairs are disulfide-bonded: Cys-25/Cys-39, Cys-33/Cys-45, Cys-47/Cys-56, Cys-69/Cys-79, Cys-73/Cys-85, and Cys-87/Cys-96.

In terms of tissue distribution, component of the organic matrix of calcified shell layers.

In Magallana gigas (Pacific oyster), this protein is Gigasin-2.